The sequence spans 66 residues: Large ribosomal subunit protein uL29 (66 aa).

Belongs to the universal ribosomal protein uL29 family.

The polypeptide is Large ribosomal subunit protein uL29 (Hydrogenobaculum sp. (strain Y04AAS1)).